The primary structure comprises 558 residues: V-set and immunoglobulin domain-containing protein 10 (558 aa).

Residues 1-20 (MAGLRVLLCLGALLARQGSA) form the signal peptide. Residues 21–426 (GLQLLLNPSR…IWLSVKEPLN (406 aa)) lie on the Extracellular side of the membrane. 6 N-linked (GlcNAc...) asparagine glycosylation sites follow: Asn32, Asn60, Asn121, Asn150, Asn159, and Asn218. Ig-like C2-type domains follow at residues 37-140 (PNSE…RLRV), 144-235 (PAYV…RKVT), 248-327 (PQCS…VKLS), and 332-420 (PSQP…IWLS). A disulfide bridge links Cys65 with Cys124. 2 disulfides stabilise this stretch: Cys174–Cys221 and Cys265–Cys308. N-linked (GlcNAc...) asparagine glycosylation occurs at Asn344. Cys349 and Cys404 are disulfide-bonded. A helical membrane pass occupies residues 427 to 447 (IGGIVGTVVSLLLLGLAVVSG). Residues 448-558 (LTLYYSPAFW…GIVQEDGKPV (111 aa)) lie on the Cytoplasmic side of the membrane. Over residues 477–506 (DSEEEEEEEEEEEEKEDVAEEVEQETNETE) the composition is skewed to acidic residues. Disordered regions lie at residues 477–515 (DSEEEEEEEEEEEEKEDVAEEVEQETNETEELPKGISKH) and 532–558 (MGNGFQEFQDDSDGQQSGIVQEDGKPV).

It is found in the membrane. This is V-set and immunoglobulin domain-containing protein 10 (Vsig10) from Mus musculus (Mouse).